The primary structure comprises 181 residues: uncharacterized protein (181 aa).

This is an uncharacterized protein from Acheta domesticus (House cricket).